The primary structure comprises 397 residues: Phosphoglycerate kinase (397 aa).

Substrate is bound by residues 23–25 (DLN), Arg38, 61–64 (HLGR), Arg119, and Arg152. Residues Lys202, Glu324, and 354 to 357 (GGDT) contribute to the ATP site.

The protein belongs to the phosphoglycerate kinase family. In terms of assembly, monomer.

It is found in the cytoplasm. The catalysed reaction is (2R)-3-phosphoglycerate + ATP = (2R)-3-phospho-glyceroyl phosphate + ADP. It functions in the pathway carbohydrate degradation; glycolysis; pyruvate from D-glyceraldehyde 3-phosphate: step 2/5. This Xanthobacter flavus protein is Phosphoglycerate kinase (pgk).